A 187-amino-acid polypeptide reads, in one-letter code: Large ribosomal subunit protein uL10 (187 aa).

This sequence belongs to the universal ribosomal protein uL10 family. Part of the ribosomal stalk of the 50S ribosomal subunit. The N-terminus interacts with L11 and the large rRNA to form the base of the stalk. The C-terminus forms an elongated spine to which L12 dimers bind in a sequential fashion forming a multimeric L10(L12)X complex.

Functionally, forms part of the ribosomal stalk, playing a central role in the interaction of the ribosome with GTP-bound translation factors. In Synechococcus sp. (strain JA-2-3B'a(2-13)) (Cyanobacteria bacterium Yellowstone B-Prime), this protein is Large ribosomal subunit protein uL10.